A 326-amino-acid polypeptide reads, in one-letter code: MAFTPFPPRQPTASARLPLTLMTLDDWALATITGADSEKYMQGQVTADVSQMTEDQHLLAAHCDAKGKMWSNLRLFRDGDGFAWIERRSVREPQLTELKKYAVFSKVTIAPDDERVLLGVAGFQARAALANLFSELPSREKQVVKEGATTLLWFEHPAERFLIVIDEATANMLTDKLRGEAELNNSQQWLALNIEAGFPVIDAANSGQFIPQATNLQALGGISFKKGCYTGQEMVARAKFRGANKRALWLLKGSASRLPEAGEDLELKMGENWRRTGTVLAAVKLEDGQVVVQVVMNNDMEPDSIFRVRDDANTLRIEPLPYSLEE.

Residues Trp-27 and Trp-189 each contribute to the folate site.

This sequence belongs to the tRNA-modifying YgfZ family.

It localises to the cytoplasm. Functionally, folate-binding protein involved in regulating the level of ATP-DnaA and in the modification of some tRNAs. It is probably a key factor in regulatory networks that act via tRNA modification, such as initiation of chromosomal replication. The polypeptide is tRNA-modifying protein YgfZ (Escherichia coli O127:H6 (strain E2348/69 / EPEC)).